Reading from the N-terminus, the 69-residue chain is Microcin H47 immunity protein MchI (69 aa).

Residues 1–6 lie on the Cytoplasmic side of the membrane; that stretch reads MSYKKL. The helical transmembrane segment at 7–29 threads the bilayer; it reads YQLTAIFSLPLTILLVSLSSLRI. Residues 30–38 are Periplasmic-facing; sequence VGEGNSYVD. The helical transmembrane segment at 39-61 threads the bilayer; sequence VFLSFIIFLGFIELIHGIRKILV. The Cytoplasmic portion of the chain corresponds to 62-69; that stretch reads WSGWKNGS.

The protein resides in the cell membrane. In terms of biological role, protects a microcin H47-producer cell against microcin H47. The chain is Microcin H47 immunity protein MchI (mchI) from Escherichia coli.